The primary structure comprises 113 residues: UPF0342 protein SPy_0811/M5005_Spy0626 (113 aa).

Belongs to the UPF0342 family.

This is UPF0342 protein SPy_0811/M5005_Spy0626 from Streptococcus pyogenes serotype M1.